A 184-amino-acid polypeptide reads, in one-letter code: dCTP deaminase (184 aa).

107–112 (KSTIAR) is a binding site for dCTP. The active-site Proton donor/acceptor is Glu-133. Gln-152, Tyr-166, and Gln-176 together coordinate dCTP.

It belongs to the dCTP deaminase family. Homotrimer.

It catalyses the reaction dCTP + H2O + H(+) = dUTP + NH4(+). The protein operates within pyrimidine metabolism; dUMP biosynthesis; dUMP from dCTP (dUTP route): step 1/2. In terms of biological role, catalyzes the deamination of dCTP to dUTP. In Roseiflexus castenholzii (strain DSM 13941 / HLO8), this protein is dCTP deaminase.